The primary structure comprises 564 residues: Beta-catenin-like protein 1 homolog (564 aa).

The disordered stretch occupies residues 1-56; sequence MDVDSIFKNTEETNKKRNPEEADSLEPASSRRRLAEENSDEENEEFDEEGGRFFGS. Residues 9 to 20 show a composition bias toward basic and acidic residues; it reads NTEETNKKRNPE. Positions 37-48 are enriched in acidic residues; the sequence is ENSDEENEEFDE. At Ser-39 the chain carries Phosphoserine. HEAT repeat units follow at residues 83–133 and 138–177; these read PTEL…VLSE and IPIF…DEDV. 5 ARM repeats span residues 179–229, 230–276, 277–326, 328–366, and 367–411; these read PDAL…LLSV, DNSI…LANS, KEAK…LVQE, KGKS…LLFG, and PLST…LFRS. Residues 465 to 528 adopt a coiled-coil conformation; the sequence is EKSTKWFLQQ…DALKNYHENL (64 aa).

Its subcellular location is the nucleus. Probable spliceosomal component involved in the activation of pre-mRNA splicing. The polypeptide is Beta-catenin-like protein 1 homolog (ctnnbl1) (Schizosaccharomyces pombe (strain 972 / ATCC 24843) (Fission yeast)).